A 105-amino-acid chain; its full sequence is Pyrimidine/purine nucleoside phosphorylase (105 aa).

The protein belongs to the nucleoside phosphorylase PpnP family.

It catalyses the reaction a purine D-ribonucleoside + phosphate = a purine nucleobase + alpha-D-ribose 1-phosphate. The enzyme catalyses adenosine + phosphate = alpha-D-ribose 1-phosphate + adenine. The catalysed reaction is cytidine + phosphate = cytosine + alpha-D-ribose 1-phosphate. It carries out the reaction guanosine + phosphate = alpha-D-ribose 1-phosphate + guanine. It catalyses the reaction inosine + phosphate = alpha-D-ribose 1-phosphate + hypoxanthine. The enzyme catalyses thymidine + phosphate = 2-deoxy-alpha-D-ribose 1-phosphate + thymine. The catalysed reaction is uridine + phosphate = alpha-D-ribose 1-phosphate + uracil. It carries out the reaction xanthosine + phosphate = alpha-D-ribose 1-phosphate + xanthine. Functionally, catalyzes the phosphorolysis of diverse nucleosides, yielding D-ribose 1-phosphate and the respective free bases. Can use uridine, adenosine, guanosine, cytidine, thymidine, inosine and xanthosine as substrates. Also catalyzes the reverse reactions. This Clostridioides difficile (strain 630) (Peptoclostridium difficile) protein is Pyrimidine/purine nucleoside phosphorylase.